The chain runs to 238 residues: LexA repressor (238 aa).

A DNA-binding region (H-T-H motif) is located at residues 26 to 46 (FDEMKDALDLRSKSGIHRLIT). Residues Ser-159 and Lys-197 each act as for autocatalytic cleavage activity in the active site.

Belongs to the peptidase S24 family. As to quaternary structure, homodimer.

It carries out the reaction Hydrolysis of Ala-|-Gly bond in repressor LexA.. Functionally, represses a number of genes involved in the response to DNA damage (SOS response), including recA and lexA. In the presence of single-stranded DNA, RecA interacts with LexA causing an autocatalytic cleavage which disrupts the DNA-binding part of LexA, leading to derepression of the SOS regulon and eventually DNA repair. The chain is LexA repressor from Rhodobacter capsulatus (Rhodopseudomonas capsulata).